The following is a 231-amino-acid chain: Transmembrane protein 225 (231 aa).

Topologically, residues 1-13 (MMRIPNRSIQAAN) are cytoplasmic. Residues 14–34 (IFFSSGAILLLIAGLIMENWV) form a helical membrane-spanning segment. Residues 35-71 (ELIPKVRKDKVTHSPWLGCCPPFWPEESLEAIRRMMM) lie on the Extracellular side of the membrane. The helical transmembrane segment at 72–92 (MSLNISIYLNLIIGLQFTYMI) threads the bilayer. Over 93 to 99 (SQNKCVH) the chain is Cytoplasmic. Residues 100–120 (LLIGFLSFFTGCLLFYAIIVY) traverse the membrane as a helical segment. Over 121 to 139 (HHKLNKGQYVYFVNYKTKW) the chain is Extracellular. A helical transmembrane segment spans residues 140-160 (IVFTIYLTIALFLTCGIFSFI). The Cytoplasmic portion of the chain corresponds to 161 to 231 (QCTNRCACMK…LQSRRVTWAL (71 aa)). Positions 225-229 (RRVTW) match the RVxF motif.

As to quaternary structure, interacts (via RVxF motif) with PPP1CC. As to expression, expressed in testis, specifically in spermatocytes and round spermatids.

It localises to the cytoplasmic vesicle. The protein resides in the secretory vesicle. It is found in the acrosome membrane. In terms of biological role, probably inhibits protein phosphatase 1 (PP1) in sperm via binding to catalytic subunit PPP1CC. In Rattus norvegicus (Rat), this protein is Transmembrane protein 225 (Tmem225).